The sequence spans 344 residues: Probable magnesium transporter NIPA9 (344 aa).

The Cytoplasmic portion of the chain corresponds to 1 to 46 (MWESICLTLAATAGNNIGKVLQKKGTIILPPLSLKLKVLRAYAENK). Transmembrane regions (helical) follow at residues 47–67 (PWALGFLMDIVGALLMLRALS) and 68–88 (LAPVSVVQPVSGCGLAILSVF). The Cytoplasmic portion of the chain corresponds to 89–98 (SHFYLKEVMN). The helical transmembrane segment at 99–119 (VFDWIGITVAGIGTIGVGAGG) threads the bilayer. Residues 120–125 (EEQEAS) are Extracellular-facing. The chain crosses the membrane as a helical span at residues 126-146 (LISVFQLLWLALVVAILFVLL). Residues 147–166 (NAWLHIFKRQRREQELGEYE) lie on the Cytoplasmic side of the membrane. The chain crosses the membrane as a helical span at residues 167-187 (VVEEIIYGLESGILFGMASVV). Topologically, residues 188–191 (SKMG) are extracellular. A helical transmembrane segment spans residues 192–212 (FVFVEQGFSTMFIPMCISISI). Over 213–231 (CCSGTGFFYQTRGLKHGRA) the chain is Cytoplasmic. Residues 232–252 (IVVSTCAAVASIVTGVVAGMF) form a helical membrane-spanning segment. The Extracellular portion of the chain corresponds to 253–265 (ALGEKLPTSPSGR). Residues 266 to 286 (LLLLLGWLLIMLGVVLLVTSS) traverse the membrane as a helical segment. The Cytoplasmic portion of the chain corresponds to 287–344 (RLIRHLPRSFRRSRQTSLERGFNIRRTTSHTPKDTNPSAVIQAATLHHLLSSPSKDKD).

It belongs to the NIPA (TC 2.A.7) family. As to quaternary structure, homodimer.

The protein resides in the cell membrane. It localises to the early endosome. Acts as a Mg(2+) transporter. Can also transport other divalent cations such as Fe(2+), Sr(2+), Ba(2+), Mn(2+) and Co(2+) but to a much less extent than Mg(2+). This Arabidopsis thaliana (Mouse-ear cress) protein is Probable magnesium transporter NIPA9.